The sequence spans 396 residues: S-adenosylmethionine synthase (396 aa).

His16 provides a ligand contact to ATP. Position 18 (Asp18) interacts with Mg(2+). Residue Glu44 coordinates K(+). L-methionine contacts are provided by Glu57 and Gln100. A flexible loop region spans residues 100 to 110 (QSPDINQGVDR). Residues 165 to 167 (DAK), Asp240, 246 to 247 (RK), Ala263, and Lys267 contribute to the ATP site. Asp240 contacts L-methionine. Lys271 provides a ligand contact to L-methionine.

The protein belongs to the AdoMet synthase family. As to quaternary structure, homotetramer; dimer of dimers. Mg(2+) serves as cofactor. The cofactor is K(+).

Its subcellular location is the cytoplasm. The catalysed reaction is L-methionine + ATP + H2O = S-adenosyl-L-methionine + phosphate + diphosphate. Its pathway is amino-acid biosynthesis; S-adenosyl-L-methionine biosynthesis; S-adenosyl-L-methionine from L-methionine: step 1/1. Catalyzes the formation of S-adenosylmethionine (AdoMet) from methionine and ATP. The overall synthetic reaction is composed of two sequential steps, AdoMet formation and the subsequent tripolyphosphate hydrolysis which occurs prior to release of AdoMet from the enzyme. In Pseudomonas fluorescens (strain ATCC BAA-477 / NRRL B-23932 / Pf-5), this protein is S-adenosylmethionine synthase.